The following is a 239-amino-acid chain: Large ribosomal subunit protein uL2 (239 aa).

Disordered stretches follow at residues 1–28 (MGKR…VGPA) and 199–239 (SHPH…RRKG). A compositionally biased stretch (basic residues) spans 225–239 (KVGHIAARRTGRRKG).

The protein belongs to the universal ribosomal protein uL2 family. As to quaternary structure, part of the 50S ribosomal subunit. Forms a bridge to the 30S subunit in the 70S ribosome.

Functionally, one of the primary rRNA binding proteins. Required for association of the 30S and 50S subunits to form the 70S ribosome, for tRNA binding and peptide bond formation. It has been suggested to have peptidyltransferase activity; this is somewhat controversial. Makes several contacts with the 16S rRNA in the 70S ribosome. The protein is Large ribosomal subunit protein uL2 of Staphylothermus marinus (strain ATCC 43588 / DSM 3639 / JCM 9404 / F1).